The primary structure comprises 82 residues: Turripeptide IX-07 (82 aa).

A signal peptide spans 1–21; it reads MGFYMLLTVALLLTSLMNVEA. Residues 22 to 39 constitute a propeptide that is removed on maturation; the sequence is TPVNQAERSALEKSGLGN. 3 disulfide bridges follow: Cys48-Cys70, Cys55-Cys74, and Cys60-Cys81.

As to expression, expressed by the venom duct.

It is found in the secreted. This is Turripeptide IX-07 from Gemmula speciosa (Splendid gem-turris).